We begin with the raw amino-acid sequence, 354 residues long: Glyceraldehyde-3-phosphate dehydrogenase (354 aa).

Residues threonine 11–isoleucine 12 and glycine 108 each bind NAD(+). Serine 137 to asparagine 139 contacts D-glyceraldehyde 3-phosphate. The Nucleophile role is filled by cysteine 138. Arginine 166 contributes to the NAD(+) binding site. Residue histidine 192–glycine 193 coordinates D-glyceraldehyde 3-phosphate. NAD(+) is bound at residue glutamine 299.

It belongs to the glyceraldehyde-3-phosphate dehydrogenase family. In terms of assembly, homotetramer.

The protein localises to the cytoplasm. It carries out the reaction D-glyceraldehyde 3-phosphate + phosphate + NADP(+) = (2R)-3-phospho-glyceroyl phosphate + NADPH + H(+). The catalysed reaction is D-glyceraldehyde 3-phosphate + phosphate + NAD(+) = (2R)-3-phospho-glyceroyl phosphate + NADH + H(+). It functions in the pathway carbohydrate degradation; glycolysis; pyruvate from D-glyceraldehyde 3-phosphate: step 1/5. This Haloarcula marismortui (strain ATCC 43049 / DSM 3752 / JCM 8966 / VKM B-1809) (Halobacterium marismortui) protein is Glyceraldehyde-3-phosphate dehydrogenase.